We begin with the raw amino-acid sequence, 209 residues long: ATP-dependent Clp protease proteolytic subunit (209 aa).

The active-site Nucleophile is the Ser111. Residue His136 is part of the active site.

It belongs to the peptidase S14 family. In terms of assembly, fourteen ClpP subunits assemble into 2 heptameric rings which stack back to back to give a disk-like structure with a central cavity, resembling the structure of eukaryotic proteasomes.

It localises to the cytoplasm. It catalyses the reaction Hydrolysis of proteins to small peptides in the presence of ATP and magnesium. alpha-casein is the usual test substrate. In the absence of ATP, only oligopeptides shorter than five residues are hydrolyzed (such as succinyl-Leu-Tyr-|-NHMec, and Leu-Tyr-Leu-|-Tyr-Trp, in which cleavage of the -Tyr-|-Leu- and -Tyr-|-Trp bonds also occurs).. In terms of biological role, cleaves peptides in various proteins in a process that requires ATP hydrolysis. Has a chymotrypsin-like activity. Plays a major role in the degradation of misfolded proteins. The protein is ATP-dependent Clp protease proteolytic subunit of Dechloromonas aromatica (strain RCB).